The sequence spans 805 residues: Shutoff protein (805 aa).

Residues 1–88 (MESVEKEDSL…QVGRGDQRHG (88 aa)) form a disordered region. The segment covering 18-29 (TTASTDAANAPT) has biased composition (polar residues). Basic and acidic residues-rich tracts occupy residues 59-70 (RSVPTEDKKQDQ) and 79-88 (QVGRGDQRHG). Positions 280–345 (VMSELIVRRA…AVLVTVELEC (66 aa)) are binding to host EIF4G. The region spanning 348-466 (RFFADPEMQR…DLWTAFNERS (119 aa)) is the RRM domain. Tyrosine 365 and tyrosine 682 each carry phosphotyrosine; by host. The segment at 684-805 (DPQSGEELNP…AGTACSPTQP (122 aa)) is disordered. Positions 726–742 (GRGGILGQSGRGGFGRG) are enriched in gly residues. The segment covering 754 to 763 (RSFRGRRGVR) has biased composition (basic residues).

This sequence belongs to the adenoviridae shutoff protein family. As to quaternary structure, monomer. Interacts with hexon protein; this interaction allows chaperoning and trimerization of hexon proteins. Interacts (via N-terminus) with host initiation factor EIF4G (via C-terminus). Interacts (via RRM domain) with viral mRNAs that contain the tripartite leader; this interaction allows ribosome shunting and expression of viral late mRNAs. Might be cleaved by the viral protease. Post-translationally, phosphorylated. Tyrosine phosphorylation enhances preferential binding to tripartite leader mRNAs and allows ribosome shunting. In terms of processing, methylated. Asymmetric dimethylation by host PRMT1 of the Arg/Gly-rich region may regulate shutoff protein binding to hexon and promote the capsid assembly in the nucleus.

Its subcellular location is the host cytoplasm. Functionally, protein that inhibits host translation while promoting late viral translation by ribosome shunting. Blocks host cap-dependent translation by binding to eIF4G, displacing MKNK1 from cap initiation complexes and preventing EIF4E phosphorylation. Binds to the tripartite leader sequence of viral late mRNAs and recruits host eIF4G, PABPC1/poly-A binding protein and 40S ribosomes subunits on viral mRNAs, allowing ribosome shunting and efficient translation of late viral mRNAs even though conventional translation via ribosome scanning from the cap has been shut off in the host cell. During assembly, acts as a chaperone protein that helps hexon proteins assembly into trimers. This Homo sapiens (Human) protein is Shutoff protein.